Here is a 93-residue protein sequence, read N- to C-terminus: Small ribosomal subunit protein uS19 (93 aa).

The protein belongs to the universal ribosomal protein uS19 family.

Its function is as follows. Protein S19 forms a complex with S13 that binds strongly to the 16S ribosomal RNA. This Limosilactobacillus fermentum (strain NBRC 3956 / LMG 18251) (Lactobacillus fermentum) protein is Small ribosomal subunit protein uS19.